The following is a 908-amino-acid chain: Vacuolar membrane protease (908 aa).

The interval 1–25 is disordered; sequence MTSGEEEEGTREQVPVSQPTGTTSI. Residues 1–48 are Cytoplasmic-facing; it reads MTSGEEEEGTREQVPVSQPTGTTSIVSTKEKQPNIFIRAIRATFGYRK. The span at 15–25 shows a compositional bias: polar residues; the sequence is PVSQPTGTTSI. The chain crosses the membrane as a helical span at residues 49–69; the sequence is TSLTLFVLLTIFFTVAFSSYD. Over 70–381 the chain is Vacuolar; that stretch reads NSLDFTIDLP…FSTSVTTLNT (312 aa). N-linked (GlcNAc...) asparagine glycans are attached at residues N143 and N162. Residues H176 and D188 each coordinate Zn(2+). The active-site Proton acceptor is the E221. Residues E222, E247, and H319 each coordinate Zn(2+). The N-linked (GlcNAc...) asparagine glycan is linked to N354. The chain crosses the membrane as a helical span at residues 382 to 402; the sequence is INMVLIVLFPVLSGPLLFITV. The Cytoplasmic portion of the chain corresponds to 403 to 411; sequence RYKKWNIGT. Residues 412-432 form a helical membrane-spanning segment; that stretch reads ANLFSLPLAIVITSLVGAVVV. The Vacuolar segment spans residues 433–449; it reads NQGFRLVNEFLPASRPM. Residues 450-470 form a helical membrane-spanning segment; sequence LLVTTTTSILLLTYYILLNGI. The Cytoplasmic segment spans residues 471–480; that stretch reads NFVSPSGDQK. A helical transmembrane segment spans residues 481 to 501; it reads LVSIIQISFIYWIALIFVTRG. Residues 502 to 514 lie on the Vacuolar side of the membrane; sequence LSQNAIGDDHTGE. A helical transmembrane segment spans residues 515-535; sequence FAFTILFLLEATASLFGLIGW. The Cytoplasmic portion of the chain corresponds to 536-602; it reads TFTRSVKEPT…MQHFGYDWSL (67 aa). Positions 543-584 are disordered; that stretch reads EPTGDEEPLLNGRMERYVDGSDDEDDVEEEDDEDQSEEENHQ. Residues 562–579 show a composition bias toward acidic residues; sequence GSDDEDDVEEEDDEDQSE. Residues 603–623 form a helical membrane-spanning segment; it reads QFLLIVPISSLVIYNSGWLVI. Over 624 to 638 the chain is Vacuolar; the sequence is DGINKSIQESLVAEN. The N-linked (GlcNAc...) asparagine glycan is linked to N627. Residues 639-659 traverse the membrane as a helical segment; the sequence is FIYLIIQLFSQFWILPILPFV. Over 660-664 the chain is Cytoplasmic; sequence YKLNR. Residues 665 to 685 form a helical membrane-spanning segment; that stretch reads FMVLGLIAFALVGVTLISSVD. Residues 686–908 lie on the Vacuolar side of the membrane; the sequence is PFNQDNPLKL…LVSLTNRIEV (223 aa). N-linked (GlcNAc...) asparagine glycans are attached at residues N752 and N764.

It belongs to the peptidase M28 family. It depends on Zn(2+) as a cofactor.

It is found in the vacuole membrane. Functionally, may be involved in vacuolar sorting and osmoregulation. The sequence is that of Vacuolar membrane protease from Candida tropicalis (strain ATCC MYA-3404 / T1) (Yeast).